Consider the following 351-residue polypeptide: Phosphoribosylformylglycinamidine cyclo-ligase (351 aa).

The protein belongs to the AIR synthase family.

Its subcellular location is the cytoplasm. The enzyme catalyses 2-formamido-N(1)-(5-O-phospho-beta-D-ribosyl)acetamidine + ATP = 5-amino-1-(5-phospho-beta-D-ribosyl)imidazole + ADP + phosphate + H(+). Its pathway is purine metabolism; IMP biosynthesis via de novo pathway; 5-amino-1-(5-phospho-D-ribosyl)imidazole from N(2)-formyl-N(1)-(5-phospho-D-ribosyl)glycinamide: step 2/2. This chain is Phosphoribosylformylglycinamidine cyclo-ligase, found in Lysinibacillus sphaericus (strain C3-41).